Consider the following 104-residue polypeptide: ATP-dependent Clp protease adapter protein ClpS (104 aa).

Belongs to the ClpS family. In terms of assembly, binds to the N-terminal domain of the chaperone ClpA.

Its function is as follows. Involved in the modulation of the specificity of the ClpAP-mediated ATP-dependent protein degradation. This Hydrogenovibrio crunogenus (strain DSM 25203 / XCL-2) (Thiomicrospira crunogena) protein is ATP-dependent Clp protease adapter protein ClpS.